The following is a 979-amino-acid chain: Glycine dehydrogenase (decarboxylating) (979 aa).

The residue at position 726 (Lys-726) is an N6-(pyridoxal phosphate)lysine.

This sequence belongs to the GcvP family. In terms of assembly, the glycine cleavage system is composed of four proteins: P, T, L and H. It depends on pyridoxal 5'-phosphate as a cofactor.

The enzyme catalyses N(6)-[(R)-lipoyl]-L-lysyl-[glycine-cleavage complex H protein] + glycine + H(+) = N(6)-[(R)-S(8)-aminomethyldihydrolipoyl]-L-lysyl-[glycine-cleavage complex H protein] + CO2. The glycine cleavage system catalyzes the degradation of glycine. The P protein binds the alpha-amino group of glycine through its pyridoxal phosphate cofactor; CO(2) is released and the remaining methylamine moiety is then transferred to the lipoamide cofactor of the H protein. The protein is Glycine dehydrogenase (decarboxylating) of Ralstonia pickettii (strain 12J).